A 491-amino-acid polypeptide reads, in one-letter code: 3-octaprenyl-4-hydroxybenzoate carboxy-lyase (491 aa).

N172 lines the Mn(2+) pocket. Residues 175 to 177 (IYR), 189 to 191 (RWL), and 194 to 195 (RG) each bind prenylated FMN. E238 is a binding site for Mn(2+). D287 serves as the catalytic Proton donor.

Belongs to the UbiD family. As to quaternary structure, homohexamer. Prenylated FMN is required as a cofactor. The cofactor is Mn(2+).

Its subcellular location is the cell membrane. It carries out the reaction a 4-hydroxy-3-(all-trans-polyprenyl)benzoate + H(+) = a 2-(all-trans-polyprenyl)phenol + CO2. It functions in the pathway cofactor biosynthesis; ubiquinone biosynthesis. Functionally, catalyzes the decarboxylation of 3-octaprenyl-4-hydroxy benzoate to 2-octaprenylphenol, an intermediate step in ubiquinone biosynthesis. This Klebsiella pneumoniae subsp. pneumoniae (strain ATCC 700721 / MGH 78578) protein is 3-octaprenyl-4-hydroxybenzoate carboxy-lyase.